A 231-amino-acid chain; its full sequence is Octanoyl-[acyl-carrier-protein]:protein N-octanoyltransferase LIPT2, mitochondrial (231 aa).

A mitochondrion-targeting transit peptide spans 1 to 31; it reads MRQPAVRLVRLGRVPYAELLGLQDRWLRRLQ. Residues 41 to 224 form the BPL/LPL catalytic domain; that stretch reads GTEAGALLLC…AFKEIYKCTL (184 aa). Residues 85-92, 154-156, and 167-169 contribute to the substrate site; these read RGGLATFH, AIG, and GLA. The active-site Acyl-thioester intermediate is the Cys185.

The protein belongs to the LipB family.

It is found in the mitochondrion. The catalysed reaction is octanoyl-[ACP] + L-lysyl-[protein] = N(6)-octanoyl-L-lysyl-[protein] + holo-[ACP] + H(+). It functions in the pathway protein modification; protein lipoylation via endogenous pathway; protein N(6)-(lipoyl)lysine from octanoyl-[acyl-carrier-protein]: step 1/2. Catalyzes the transfer of endogenously produced octanoic acid from octanoyl-acyl-carrier-protein (octanoyl-ACP) onto the lipoyl domains of lipoate-dependent enzymes such as the protein H of the glycine cleavage system (GCSH). Lipoyl-ACP can also act as a substrate although octanoyl-ACP is likely to be the physiological substrate. The protein is Octanoyl-[acyl-carrier-protein]:protein N-octanoyltransferase LIPT2, mitochondrial of Homo sapiens (Human).